The chain runs to 297 residues: Formamidopyrimidine-DNA glycosylase (297 aa).

Residue P2 is the Schiff-base intermediate with DNA of the active site. Residue E3 is the Proton donor of the active site. K58 (proton donor; for beta-elimination activity) is an active-site residue. DNA-binding residues include H104, R127, and K170. Residues 261-297 form an FPG-type zinc finger; that stretch reads NVYDREGEACRTPGCTGTVERMTQAGRSTFHCPQCQR. Residue R287 is the Proton donor; for delta-elimination activity of the active site.

Belongs to the FPG family. Monomer. Zn(2+) is required as a cofactor.

It carries out the reaction Hydrolysis of DNA containing ring-opened 7-methylguanine residues, releasing 2,6-diamino-4-hydroxy-5-(N-methyl)formamidopyrimidine.. The enzyme catalyses 2'-deoxyribonucleotide-(2'-deoxyribose 5'-phosphate)-2'-deoxyribonucleotide-DNA = a 3'-end 2'-deoxyribonucleotide-(2,3-dehydro-2,3-deoxyribose 5'-phosphate)-DNA + a 5'-end 5'-phospho-2'-deoxyribonucleoside-DNA + H(+). Involved in base excision repair of DNA damaged by oxidation or by mutagenic agents. Acts as a DNA glycosylase that recognizes and removes damaged bases. Has a preference for oxidized purines, such as 7,8-dihydro-8-oxoguanine (8-oxoG). Has AP (apurinic/apyrimidinic) lyase activity and introduces nicks in the DNA strand. Cleaves the DNA backbone by beta-delta elimination to generate a single-strand break at the site of the removed base with both 3'- and 5'-phosphates. This Allorhizobium ampelinum (strain ATCC BAA-846 / DSM 112012 / S4) (Agrobacterium vitis (strain S4)) protein is Formamidopyrimidine-DNA glycosylase.